We begin with the raw amino-acid sequence, 447 residues long: NADP-specific glutamate dehydrogenase (447 aa).

Residues K92, Q113, and K116 each contribute to the substrate site. The active-site Proton donor is the K128. G167 contributes to the substrate binding site. 2 residues coordinate NADP(+): T211 and N242. Residue S380 participates in substrate binding.

The protein belongs to the Glu/Leu/Phe/Val dehydrogenases family. In terms of assembly, homohexamer.

The catalysed reaction is L-glutamate + NADP(+) + H2O = 2-oxoglutarate + NH4(+) + NADPH + H(+). Catalyzes the reversible oxidative deamination of glutamate to alpha-ketoglutarate and ammonia. This chain is NADP-specific glutamate dehydrogenase (gdhA), found in Salmonella typhimurium (strain LT2 / SGSC1412 / ATCC 700720).